Consider the following 451-residue polypeptide: Tubulin beta chain (451 aa).

Q11, E69, S138, G142, T143, G144, N204, and N226 together coordinate GTP. E69 lines the Mg(2+) pocket. Residues 426–451 are disordered; that stretch reads QDATAEEEGEFDENEGAEGEEQPADY. Residues 429–451 show a composition bias toward acidic residues; that stretch reads TAEEEGEFDENEGAEGEEQPADY.

Belongs to the tubulin family. Dimer of alpha and beta chains. A typical microtubule is a hollow water-filled tube with an outer diameter of 25 nm and an inner diameter of 15 nM. Alpha-beta heterodimers associate head-to-tail to form protofilaments running lengthwise along the microtubule wall with the beta-tubulin subunit facing the microtubule plus end conferring a structural polarity. Microtubules usually have 13 protofilaments but different protofilament numbers can be found in some organisms and specialized cells. The cofactor is Mg(2+).

Its subcellular location is the cytoplasm. It is found in the cytoskeleton. Its function is as follows. Tubulin is the major constituent of microtubules, a cylinder consisting of laterally associated linear protofilaments composed of alpha- and beta-tubulin heterodimers. Microtubules grow by the addition of GTP-tubulin dimers to the microtubule end, where a stabilizing cap forms. Below the cap, tubulin dimers are in GDP-bound state, owing to GTPase activity of alpha-tubulin. The protein is Tubulin beta chain of Naegleria pringsheimi (Amoeba).